Consider the following 905-residue polypeptide: DNA-directed RNA polymerase subunit Rpo1N (905 aa).

Residues C60, C63, C70, H73, C100, C103, C147, and C150 each contribute to the Zn(2+) site. Residues D461, D463, and D465 each contribute to the Mg(2+) site.

This sequence belongs to the RNA polymerase beta' chain family. Part of the RNA polymerase complex. It depends on Mg(2+) as a cofactor. Zn(2+) is required as a cofactor.

It is found in the cytoplasm. It carries out the reaction RNA(n) + a ribonucleoside 5'-triphosphate = RNA(n+1) + diphosphate. Functionally, DNA-dependent RNA polymerase (RNAP) catalyzes the transcription of DNA into RNA using the four ribonucleoside triphosphates as substrates. Forms the clamp head domain. This chain is DNA-directed RNA polymerase subunit Rpo1N, found in Thermococcus celer.